The chain runs to 198 residues: Putative protein-methionine-sulfoxide reductase subunit YedZ1 (198 aa).

The next 4 helical transmembrane spans lie at 12–32 (WLRVTHWLYVVAVVILVMSGW), 63–83 (FAAMWLLAVNGLIYLFFNIFS), 124–144 (AAYLFAIADIIVIVLSGLVLW), and 167–187 (FIGMSALVAFVGVHVAMVALV).

It belongs to the HupC/HyaC/HydC family.

It is found in the cell inner membrane. In terms of biological role, part of the YedY1-YedZ1 system that may repair oxidized proteins containing methionine sulfoxide residues (Met-O). The polypeptide is Putative protein-methionine-sulfoxide reductase subunit YedZ1 (Azospira oryzae (strain ATCC BAA-33 / DSM 13638 / PS) (Dechlorosoma suillum)).